The sequence spans 66 residues: Protein translocase subunit SecE (66 aa).

A helical transmembrane segment spans residues leucine 41–leucine 61.

This sequence belongs to the SecE/SEC61-gamma family. Component of the Sec protein translocase complex. Heterotrimer consisting of SecY (alpha), SecG (beta) and SecE (gamma) subunits. The heterotrimers can form oligomers, although 1 heterotrimer is thought to be able to translocate proteins. Interacts with the ribosome. May interact with SecDF, and other proteins may be involved.

The protein resides in the cell membrane. Its function is as follows. Essential subunit of the Sec protein translocation channel SecYEG. Clamps together the 2 halves of SecY. May contact the channel plug during translocation. The protein is Protein translocase subunit SecE of Archaeoglobus fulgidus (strain ATCC 49558 / DSM 4304 / JCM 9628 / NBRC 100126 / VC-16).